The chain runs to 174 residues: Flavodoxin 1 (174 aa).

Residues 4-168 form the Flavodoxin-like domain; that stretch reads IGIFYGSSSG…RLERWIAVLQ (165 aa). FMN is bound by residues 10–14 and 89–122; these read SSSGV and LFGAGDYVSHGEQFVSALGVLYDKFKARGAALVG.

It depends on FMN as a cofactor.

Functionally, flavodoxins are low-potential electron donors to a number of redox enzymes. AvFld 1 is able to donate electrons to the assimilatory nitrate reductase of A.vinelandii to catalyze the reduction of nitrate to nitrite. The chain is Flavodoxin 1 from Azotobacter vinelandii (strain DJ / ATCC BAA-1303).